A 366-amino-acid polypeptide reads, in one-letter code: DNA replication and repair protein RecF (366 aa).

An ATP-binding site is contributed by 30 to 37; it reads GDNGMGKT.

It belongs to the RecF family.

The protein localises to the cytoplasm. In terms of biological role, the RecF protein is involved in DNA metabolism; it is required for DNA replication and normal SOS inducibility. RecF binds preferentially to single-stranded, linear DNA. It also seems to bind ATP. The chain is DNA replication and repair protein RecF from Azobacteroides pseudotrichonymphae genomovar. CFP2.